The primary structure comprises 255 residues: F-box only protein 44 (255 aa).

The F-box domain occupies 3–50; that stretch reads VGNINELPENILLELFIHIPARQLLLRCRPVCSLWRDLIDLVTLWKRK. Residues 71 to 252 form the FBA domain; that stretch reads FYFLRSLQRN…VTNSSITIGP (182 aa).

In terms of assembly, part of a SCF (SKP1-cullin-F-box) protein ligase complex. Interacts with SKP1 and CUL1. In terms of tissue distribution, expressed in brain, liver, pancreas and adipose tissue (at protein level). Widely expressed.

Its function is as follows. Substrate-recognition component of the SCF (SKP1-CUL1-F-box protein)-type E3 ubiquitin ligase complex. The chain is F-box only protein 44 (Fbxo44) from Mus musculus (Mouse).